The primary structure comprises 364 residues: WAT1-related protein At3g30340 (364 aa).

10 consecutive transmembrane segments (helical) span residues 9–29 (WKAV…NVMF), 41–61 (VATT…AIFL), 76–96 (SLFF…LIGL), 102–122 (TFSL…ALVF), 138–158 (LLGT…KGTA), 183–203 (WAMG…WFIV), 215–235 (YTST…LSLI), 251–271 (VLAL…GMSW), 277–297 (GAVF…IFSF), and 304–324 (IYCG…ILLW). EamA domains are found at residues 26–152 (NVMF…LVLT) and 195–323 (IIWS…YILL).

This sequence belongs to the drug/metabolite transporter (DMT) superfamily. Plant drug/metabolite exporter (P-DME) (TC 2.A.7.4) family.

Its subcellular location is the membrane. This chain is WAT1-related protein At3g30340, found in Arabidopsis thaliana (Mouse-ear cress).